The sequence spans 279 residues: Putative expansin-A26 (279 aa).

Residues 1–27 form the signal peptide; that stretch reads MKLLEKMIYVEFLMIIMAMWVVPMSYG. The Expansin-like EG45 domain occupies 76–186; that stretch reads QGACGYGNLF…RRIPCSKTGG (111 aa). In terms of domain architecture, Expansin-like CBD spans 196–275; the sequence is YFLMVLIYNV…NWGFGQTFDG (80 aa).

The protein belongs to the expansin family. Expansin A subfamily.

It is found in the secreted. The protein resides in the cell wall. It localises to the membrane. In terms of biological role, causes loosening and extension of plant cell walls by disrupting non-covalent bonding between cellulose microfibrils and matrix glucans. No enzymatic activity has been found. The protein is Putative expansin-A26 (EXPA26) of Arabidopsis thaliana (Mouse-ear cress).